The following is a 224-amino-acid chain: DNA repair and recombination protein RadB (224 aa).

The protein belongs to the eukaryotic RecA-like protein family. RadB subfamily.

Involved in DNA repair and in homologous recombination. May regulate the cleavage reactions of the branch-structured DNA. Has a very weak ATPase activity that is not stimulated by DNA. Binds DNA but does not promote DNA strands exchange. The sequence is that of DNA repair and recombination protein RadB from Methanoculleus marisnigri (strain ATCC 35101 / DSM 1498 / JR1).